A 267-amino-acid polypeptide reads, in one-letter code: Tryptophan synthase alpha chain (267 aa).

Active-site proton acceptor residues include glutamate 49 and aspartate 60.

This sequence belongs to the TrpA family. As to quaternary structure, tetramer of two alpha and two beta chains.

It carries out the reaction (1S,2R)-1-C-(indol-3-yl)glycerol 3-phosphate + L-serine = D-glyceraldehyde 3-phosphate + L-tryptophan + H2O. Its pathway is amino-acid biosynthesis; L-tryptophan biosynthesis; L-tryptophan from chorismate: step 5/5. Its function is as follows. The alpha subunit is responsible for the aldol cleavage of indoleglycerol phosphate to indole and glyceraldehyde 3-phosphate. This is Tryptophan synthase alpha chain from Acinetobacter baumannii (strain AB307-0294).